The following is a 390-amino-acid chain: MTAIVEAFGKPHVNVGTIGHVDHGKTTLTAAITKHYGNFVAYDQIDKAPEERKRGITIATAHVEYQTEKRHYAHVDCPGHADYVKNMIVGAAQMDAAILVVSGVDGPMPQTREHILLAKQVGVGYIVVYINKADVADADMIDLVEMEVRELLSKYGFPGDEVPVVVGSALKALEDDSSEYGKKSIDKLMEKLDEYVAVPPRPVDLPFLLPIEDVFSISGRGTVVTGRIEKGEIKTGEEIEIIGLKATQKTICTGVEMFKKLLDKGSAGLNVGILLRGTKREEVERGQVLAKPGTITPHRKFKAEVYILKKEEGGRHTPFFANYQPQFYLRTTDVTGSIKLLDGKEMVMPGDNVSVEVELQVPIAMDKGLRFAIREGGRTVGSGVVSEILE.

One can recognise a tr-type G domain in the interval lysine 10 to arginine 201. The segment at glycine 19–threonine 26 is G1. Residue glycine 19 to threonine 26 coordinates GTP. Threonine 26 contacts Mg(2+). The G2 stretch occupies residues glycine 55–alanine 59. Residues aspartate 76 to glycine 79 are G3. GTP-binding positions include aspartate 76–histidine 80 and asparagine 131–aspartate 134. The tract at residues asparagine 131 to aspartate 134 is G4. Residues serine 168–leucine 170 form a G5 region.

Belongs to the TRAFAC class translation factor GTPase superfamily. Classic translation factor GTPase family. EF-Tu/EF-1A subfamily. In terms of assembly, monomer.

Its subcellular location is the cytoplasm. It carries out the reaction GTP + H2O = GDP + phosphate + H(+). Functionally, GTP hydrolase that promotes the GTP-dependent binding of aminoacyl-tRNA to the A-site of ribosomes during protein biosynthesis. The protein is Elongation factor Tu 2 of Wolbachia pipientis wMel.